A 134-amino-acid polypeptide reads, in one-letter code: ATP synthase epsilon chain (134 aa).

The protein belongs to the ATPase epsilon chain family. In terms of assembly, F-type ATPases have 2 components, CF(1) - the catalytic core - and CF(0) - the membrane proton channel. CF(1) has five subunits: alpha(3), beta(3), gamma(1), delta(1), epsilon(1). CF(0) has three main subunits: a, b and c.

It localises to the cell inner membrane. In terms of biological role, produces ATP from ADP in the presence of a proton gradient across the membrane. This Rhizobium meliloti (strain 1021) (Ensifer meliloti) protein is ATP synthase epsilon chain.